Reading from the N-terminus, the 180-residue chain is Large ribosomal subunit protein uL5 (180 aa).

This sequence belongs to the universal ribosomal protein uL5 family. As to quaternary structure, part of the 50S ribosomal subunit; part of the 5S rRNA/L5/L18/L25 subcomplex. Contacts the 5S rRNA and the P site tRNA. Forms a bridge to the 30S subunit in the 70S ribosome.

In terms of biological role, this is one of the proteins that bind and probably mediate the attachment of the 5S RNA into the large ribosomal subunit, where it forms part of the central protuberance. In the 70S ribosome it contacts protein S13 of the 30S subunit (bridge B1b), connecting the 2 subunits; this bridge is implicated in subunit movement. Contacts the P site tRNA; the 5S rRNA and some of its associated proteins might help stabilize positioning of ribosome-bound tRNAs. This Leuconostoc citreum (strain KM20) protein is Large ribosomal subunit protein uL5.